The chain runs to 347 residues: S-adenosylmethionine:tRNA ribosyltransferase-isomerase (347 aa).

This sequence belongs to the QueA family. As to quaternary structure, monomer.

It is found in the cytoplasm. It carries out the reaction 7-aminomethyl-7-carbaguanosine(34) in tRNA + S-adenosyl-L-methionine = epoxyqueuosine(34) in tRNA + adenine + L-methionine + 2 H(+). It functions in the pathway tRNA modification; tRNA-queuosine biosynthesis. In terms of biological role, transfers and isomerizes the ribose moiety from AdoMet to the 7-aminomethyl group of 7-deazaguanine (preQ1-tRNA) to give epoxyqueuosine (oQ-tRNA). This Pseudomonas aeruginosa (strain LESB58) protein is S-adenosylmethionine:tRNA ribosyltransferase-isomerase.